Here is a 555-residue protein sequence, read N- to C-terminus: Small ribosomal subunit protein uS3m (555 aa).

Positions 1 to 20 (MARKGNPISVRLGKNRSSDS) are disordered.

Belongs to the universal ribosomal protein uS3 family.

The protein resides in the mitochondrion. The sequence is that of Small ribosomal subunit protein uS3m (RPS3) from Brassica napus (Rape).